The primary structure comprises 488 residues: GTPase Der (488 aa).

An EngA-type G 1 domain is found at 3–166 (PVVALVGRPN…YALAPYAEAL (164 aa)). GTP-binding positions include 9–16 (GRPNVGKS), 56–60 (DTGGI), and 118–121 (NKVD). The tract at residues 168 to 192 (LNRDGDDEEEKEEREYTEEEAEAEQ) is disordered. A compositionally biased stretch (acidic residues) spans 172 to 190 (GDDEEEKEEREYTEEEAEA). The EngA-type G 2 domain occupies 200–373 (IKLAVIGKPN…SVQEAYESAT (174 aa)). Residues 206-213 (GKPNVGKS), 253-257 (DTAGV), and 318-321 (NKWD) contribute to the GTP site. The KH-like domain maps to 374 to 458 (RRVSTSMLTR…PIQVRFQDGD (85 aa)).

Belongs to the TRAFAC class TrmE-Era-EngA-EngB-Septin-like GTPase superfamily. EngA (Der) GTPase family. In terms of assembly, associates with the 50S ribosomal subunit.

In terms of biological role, GTPase that plays an essential role in the late steps of ribosome biogenesis. The chain is GTPase Der from Shewanella woodyi (strain ATCC 51908 / MS32).